The primary structure comprises 1120 residues: ELKS/Rab6-interacting/CAST family member 1 (1120 aa).

Positions M1–L54 are disordered. N6-acetyllysine is present on K10. Positions P13–P28 are enriched in low complexity. 3 positions are modified to phosphoserine: S17, S21, and S37. T38 is modified (phosphothreonine). Residues G40 to G51 show a composition bias toward gly residues. Phosphoserine occurs at positions 55, 75, 94, 824, 965, and 1009. Residues R144–E992 are a coiled coil. Positions K801–S824 are enriched in basic and acidic residues. Residues K801 to D840 are disordered. T1050 carries the phosphothreonine modification. The FIP-RBD domain occupies T1050–V1112. The stretch at E1060–H1104 forms a coiled coil.

Interacts with the GTB-bound forms of RAB6A isoform 1 and isoform 2 and with RAB6B. The interaction was strongest with RAB6B, followed by RAB6A isoform 2 and weakest with RAB6A isoform 1. Part of a complex with CHUK, IKBKB and IKBKG. Interacts with CHUK, IKBKB and IKBKG. The interaction with IKBKG is independent of CHUK and IKBKB. Interacts with NFKBIA. Isoform 2 interacts through its C-terminus with the PDZ domains of RIMS1 and RIMS2. Interacts with ERC2/CAST1. Interacts with SDCCAG8. Part of a cortical microtubule stabilization complex (CMSC) composed of KANK1, PPFIA1, PPFIBP1, ERC1/ELKS, PHLDB2/LL5beta, CLASPs, KIF21A and possibly additional interactors; within CMSCs KANK1 and PHLDB2/LL5beta appear to be the core components for targeting of microtubule-binding proteins KIF21A and CLASPs, whereas PPFIA1, PPFIBP1 and ERC1/ELKS serve as scaffolds for protein clustering. Widely expressed.

Its subcellular location is the cytoplasm. The protein resides in the cytoskeleton. It is found in the microtubule organizing center. The protein localises to the centrosome. It localises to the membrane. Its subcellular location is the golgi apparatus membrane. The protein resides in the presynaptic active zone. It is found in the cell projection. The protein localises to the podosome. Functionally, regulatory subunit of the IKK complex. Probably recruits IkappaBalpha/NFKBIA to the complex. May be involved in the organization of the cytomatrix at the nerve terminals active zone (CAZ) which regulates neurotransmitter release. May be involved in vesicle trafficking at the CAZ. May be involved in Rab-6 regulated endosomes to Golgi transport. This chain is ELKS/Rab6-interacting/CAST family member 1, found in Mus musculus (Mouse).